We begin with the raw amino-acid sequence, 489 residues long: MSISAEDLSTQPQRRKLPEIAELIDETLKAYPEKFAKRRAKHLNVYEEGKSECDVKSNIKSVPGVMTIRGCAYAGSYGVVWSPVKDMIHISHGPVGCGHYARAGRRAYYIGTTGVDTYTTMHFTSDFQEKDIVFGGDKKLAKLMDELEELFPMSKGITVQSECPIGLIGDDIEAVSKKKAAEFGKPVVPNRCEGFRGVSQSLGHHIANDSIRDWVLDPAADKHPDFESTPYDVTLLGDYNIGGDWGSRIILEEMGLRVIAQWSGDAPSRSSTASSKSKLNLLHCYRSVNYITRHMEEKYGIPYIEFNFFGPTKIKESLRQIAAFFDESIQEKAEKAIAKYQPQWDAVVEKFRPRLEGKKVMLFVGGLRPGHTIGAFEDLGMEVIGTGYEFGHNDDYQRTTHEIKGNTLIYDDVTGYEFEKFAEKLRPDLVASGVKEKYIFQKMGFPFRQMHSWDYSGPYHGPDGFAIFARDMDMAVNNPVWGLTQAPWK.

Positions 71, 97, and 163 each coordinate [8Fe-7S] cluster. Residues Cys-284 and His-451 each coordinate [7Fe-Mo-9S-C-homocitryl] cluster.

Belongs to the NifD/NifK/NifE/NifN family. In terms of assembly, tetramer of two alpha and two beta chains. Forms complex with the iron protein (nitrogenase component 2). It depends on [8Fe-7S] cluster as a cofactor. The cofactor is [7Fe-Mo-9S-C-homocitryl] cluster.

The enzyme catalyses N2 + 8 reduced [2Fe-2S]-[ferredoxin] + 16 ATP + 16 H2O = H2 + 8 oxidized [2Fe-2S]-[ferredoxin] + 2 NH4(+) + 16 ADP + 16 phosphate + 6 H(+). In terms of biological role, this molybdenum-iron protein is part of the nitrogenase complex that catalyzes the key enzymatic reactions in nitrogen fixation. This Acidithiobacillus ferridurans protein is Nitrogenase molybdenum-iron protein alpha chain (nifD).